A 704-amino-acid chain; its full sequence is Neutral ceramidase (704 aa).

The N-terminal stretch at 1–23 (MAISKIAFLALIALSGLCGLASA) is a signal peptide. Residue asparagine 230 is glycosylated (N-linked (GlcNAc...) asparagine). Serine 276 functions as the Nucleophile in the catalytic mechanism. N-linked (GlcNAc...) asparagine glycosylation is found at asparagine 362, asparagine 550, and asparagine 598.

It belongs to the neutral ceramidase family. N-glycosylated.

It is found in the secreted. It carries out the reaction an N-acylsphing-4-enine + H2O = sphing-4-enine + a fatty acid. In terms of biological role, hydrolyzes the sphingolipid ceramide into sphingosine and free fatty acid at an optimal pH of 6.5-7.5. Acts as a key regulator of sphingolipid signaling metabolites by generating sphingosine at the cell surface. This Drosophila pseudoobscura pseudoobscura (Fruit fly) protein is Neutral ceramidase (CDase).